The primary structure comprises 120 residues: Aspartate 1-decarboxylase (120 aa).

Catalysis depends on Ser-25, which acts as the Schiff-base intermediate with substrate; via pyruvic acid. Ser-25 carries the pyruvic acid (Ser) modification. Residue Thr-57 participates in substrate binding. The active-site Proton donor is the Tyr-58. 73 to 75 (GAA) contributes to the substrate binding site.

The protein belongs to the PanD family. As to quaternary structure, heterooctamer of four alpha and four beta subunits. It depends on pyruvate as a cofactor. Is synthesized initially as an inactive proenzyme, which is activated by self-cleavage at a specific serine bond to produce a beta-subunit with a hydroxyl group at its C-terminus and an alpha-subunit with a pyruvoyl group at its N-terminus.

Its subcellular location is the cytoplasm. The catalysed reaction is L-aspartate + H(+) = beta-alanine + CO2. Its pathway is cofactor biosynthesis; (R)-pantothenate biosynthesis; beta-alanine from L-aspartate: step 1/1. Catalyzes the pyruvoyl-dependent decarboxylation of aspartate to produce beta-alanine. The chain is Aspartate 1-decarboxylase from Methylibium petroleiphilum (strain ATCC BAA-1232 / LMG 22953 / PM1).